The following is a 288-amino-acid chain: Plasmodesmata-located protein 6 (288 aa).

The N-terminal stretch at 1–22 is a signal peptide; that stretch reads MFATKTVLFIAVVSLLGTFSSA. Residues 23 to 256 are Extracellular-facing; it reads AVDTFIYGGC…NNDDDEIEKT (234 aa). Gnk2-homologous domains are found at residues 25 to 132 and 137 to 234; these read DTFI…NTTF and DKTV…ARGG. 6 disulfides stabilise this stretch: cysteine 32/cysteine 110, cysteine 84/cysteine 95, cysteine 98/cysteine 123, cysteine 145/cysteine 212, cysteine 188/cysteine 197, and cysteine 200/cysteine 225. The chain crosses the membrane as a helical span at residues 257-277; that stretch reads LAIIVGLIAGVTLLVVFLSFM. The interval 257-277 is necessary and sufficient for plasmodesmal targeting; it reads LAIIVGLIAGVTLLVVFLSFM. Over 278–288 the chain is Cytoplasmic; that stretch reads AKSCERGKGGK.

It belongs to the cysteine-rich repeat secretory protein family. Plasmodesmata-located proteins (PDLD) subfamily. As to quaternary structure, (Microbial infection) Interacts with Grapevine fanleaf virus (GFLV) 2B-MP. Highly expressed in inflorescence silique (at mRNA level).

The protein resides in the cell membrane. Its subcellular location is the cell junction. It localises to the plasmodesma. Modulates cell-to-cell trafficking. In Arabidopsis thaliana (Mouse-ear cress), this protein is Plasmodesmata-located protein 6.